The chain runs to 358 residues: Tribbles homolog 3 (358 aa).

The interval 1–54 (MRATPLAAPAGSLSRKKRLELDDNLDTERPVQKRARSGPQPRLPPCLLPLSPPT) is disordered. The interaction with DDIT3/CHOP stretch occupies residues 1 to 127 (MRATPLAAPA…KHVARPTEVL (127 aa)). S12 carries the post-translational modification Phosphoserine. A compositionally biased stretch (pro residues) spans 41–54 (PRLPPCLLPLSPPT). One can recognise a Protein kinase domain in the interval 68 to 316 (LGPYVLLEPE…TGILLHPWLR (249 aa)).

It belongs to the protein kinase superfamily. CAMK Ser/Thr protein kinase family. Tribbles subfamily. Interacts with AKT1, AKT2, MAP2K1 and MAP2K7. Interacts with ATF4. Interacts with DDIT3/CHOP and inhibits its interaction with EP300/P300. Interacts with APOBEC3C. Interacts (via N-terminus) with APOBEC3A. Interacts with RELA. In terms of tissue distribution, highest expression in liver, pancreas, peripheral blood leukocytes and bone marrow. Also highly expressed in a number of primary lung, colon and breast tumors. Expressed in spleen, thymus, and prostate and is undetectable in other examined tissues, including testis, ovary, small intestine, colon, leukocyte, heart, brain, placenta, lung, skeletal muscle, and kidney.

It is found in the nucleus. Its function is as follows. Inactive protein kinase which acts as a regulator of the integrated stress response (ISR), a process for adaptation to various stress. Inhibits the transcriptional activity of DDIT3/CHOP and is involved in DDIT3/CHOP-dependent cell death during ER stress. May play a role in programmed neuronal cell death but does not appear to affect non-neuronal cells. Acts as a negative feedback regulator of the ATF4-dependent transcription during the ISR: while TRIB3 expression is promoted by ATF4, TRIB3 protein interacts with ATF4 and inhibits ATF4 transcription activity. Disrupts insulin signaling by binding directly to Akt kinases and blocking their activation. May bind directly to and mask the 'Thr-308' phosphorylation site in AKT1. Interacts with the NF-kappa-B transactivator p65 RELA and inhibits its phosphorylation and thus its transcriptional activation activity. Interacts with MAPK kinases and regulates activation of MAP kinases. Can inhibit APOBEC3A editing of nuclear DNA. The sequence is that of Tribbles homolog 3 (TRIB3) from Homo sapiens (Human).